The following is a 388-amino-acid chain: Succinate--CoA ligase [ADP-forming] subunit beta (388 aa).

One can recognise an ATP-grasp domain in the interval 9–244 (KQLFAEYGLP…PSQDDAREAH (236 aa)). ATP-binding positions include Lys-46, 53–55 (GRG), Glu-99, Thr-102, and Glu-107. Positions 199 and 213 each coordinate Mg(2+). Substrate-binding positions include Asn-264 and 321–323 (GIV).

This sequence belongs to the succinate/malate CoA ligase beta subunit family. As to quaternary structure, heterotetramer of two alpha and two beta subunits. The cofactor is Mg(2+).

It carries out the reaction succinate + ATP + CoA = succinyl-CoA + ADP + phosphate. It catalyses the reaction GTP + succinate + CoA = succinyl-CoA + GDP + phosphate. It functions in the pathway carbohydrate metabolism; tricarboxylic acid cycle; succinate from succinyl-CoA (ligase route): step 1/1. Succinyl-CoA synthetase functions in the citric acid cycle (TCA), coupling the hydrolysis of succinyl-CoA to the synthesis of either ATP or GTP and thus represents the only step of substrate-level phosphorylation in the TCA. The beta subunit provides nucleotide specificity of the enzyme and binds the substrate succinate, while the binding sites for coenzyme A and phosphate are found in the alpha subunit. This chain is Succinate--CoA ligase [ADP-forming] subunit beta, found in Pseudomonas aeruginosa (strain UCBPP-PA14).